We begin with the raw amino-acid sequence, 253 residues long: tRNA uridine(34) hydroxylase (253 aa).

Positions 127-221 (RGRPLVLLDT…YFEEVGGEGY (95 aa)) constitute a Rhodanese domain. C181 functions as the Cysteine persulfide intermediate in the catalytic mechanism.

Belongs to the TrhO family.

It carries out the reaction uridine(34) in tRNA + AH2 + O2 = 5-hydroxyuridine(34) in tRNA + A + H2O. Its function is as follows. Catalyzes oxygen-dependent 5-hydroxyuridine (ho5U) modification at position 34 in tRNAs. The sequence is that of tRNA uridine(34) hydroxylase from Xanthomonas oryzae pv. oryzae (strain MAFF 311018).